Reading from the N-terminus, the 275-residue chain is Low affinity immunoglobulin gamma Fc region receptor III-A (275 aa).

Residues 1 to 23 (MSVWTSRKAAEDNDTSLSSGIRA) form the signal peptide. Residues 24–207 (GLQKAVVTLH…SPSTFPPWHQ (184 aa)) are Extracellular-facing. 2 Ig-like C2-type domains span residues 28 to 92 (AVVT…YTCQ) and 101 to 192 (PVNL…LRIT). 2 cysteine pairs are disulfide-bonded: cysteine 49–cysteine 91 and cysteine 131–cysteine 175. N-linked (GlcNAc...) asparagine glycosylation is found at asparagine 65, asparagine 168, and asparagine 183. The helical transmembrane segment at 208–228 (ITFCLLIGLLFTIDTVMYFSV) threads the bilayer. Residues 229 to 275 (QKGLRRSTADYEEPEVHWSKEPENKTISEEKQSFRSSRANSETPENR) lie on the Cytoplasmic side of the membrane. Residues 237–275 (ADYEEPEVHWSKEPENKTISEEKQSFRSSRANSETPENR) are disordered. Residue tyrosine 239 is modified to Phosphotyrosine. Over residues 242 to 261 (PEVHWSKEPENKTISEEKQS) the composition is skewed to basic and acidic residues. The span at 262–275 (FRSSRANSETPENR) shows a compositional bias: polar residues.

Forms a heterooligomeric complex with ITAM-containing signaling subunits FCER1G. Interacts (via transmembrane domain) with signaling subunits; this interaction is a prerequisite for receptor complex expression on the cell surface and intracellular signal transduction. Binds the Fc region of antigen-complexed IgG. In terms of processing, N-glycosylated. Phosphorylated following receptor ligation.

It is found in the cell membrane. Functionally, receptor for the invariable Fc fragment of immunoglobulin gamma (IgG). Binds with intermediate affinity to both IgG2a and IgG2b. Can bind to IgG2a and IgG2b monomers. Does not display binding to IgG1 or IgG3. Recognizes neutralizing virus-specific IgGs displayed on the cell surface of infected cells and triggers antibody-dependent cellular cytotoxicity (ADCC). Confers protection to lethal influenza virus infection. On splenic dendritic cells, uptakes antigen immune complexes and efficiently divert them into MHC class I and II antigen presentation pathways to provide for superior priming of CD4-positive and CD8-positive T cell immune responses. Mediates neutrophil activation by IgG complexes redundantly with FCGR2A. Plays a role in promoting bone resorption by enhancing osteoclast differentiation following binding to IgG2a. Also acts as a receptor for the Fc region of immunoglobulin epsilon (IgE). Binds with low affinity to both the a and b allotypes of IgE. Has also been shown to bind to IgE allotype a only but not to allotype b. Binds aggregated IgE but not the monomeric form and bound monomeric IgG is readily displaced by IgE complexes. Binding to IgE promotes macrophage-mediated phagocytosis, antigen presentation to T cells, production of pro-inflammatory cytokines and the late phase of cutaneous allergic reactions. Mediates enhanced ADCC in response to afucosylated IgGs. This Cricetulus griseus (Chinese hamster) protein is Low affinity immunoglobulin gamma Fc region receptor III-A.